The following is a 612-amino-acid chain: Dihydroxy-acid dehydratase (612 aa).

Residue aspartate 81 coordinates Mg(2+). Cysteine 122 contacts [2Fe-2S] cluster. The Mg(2+) site is built by aspartate 123 and lysine 124. Lysine 124 is subject to N6-carboxylysine. Cysteine 193 is a binding site for [2Fe-2S] cluster. Glutamate 489 contacts Mg(2+). The active-site Proton acceptor is the serine 515.

This sequence belongs to the IlvD/Edd family. In terms of assembly, homodimer. Requires [2Fe-2S] cluster as cofactor. Mg(2+) serves as cofactor.

The enzyme catalyses (2R)-2,3-dihydroxy-3-methylbutanoate = 3-methyl-2-oxobutanoate + H2O. The catalysed reaction is (2R,3R)-2,3-dihydroxy-3-methylpentanoate = (S)-3-methyl-2-oxopentanoate + H2O. It participates in amino-acid biosynthesis; L-isoleucine biosynthesis; L-isoleucine from 2-oxobutanoate: step 3/4. It functions in the pathway amino-acid biosynthesis; L-valine biosynthesis; L-valine from pyruvate: step 3/4. In terms of biological role, functions in the biosynthesis of branched-chain amino acids. Catalyzes the dehydration of (2R,3R)-2,3-dihydroxy-3-methylpentanoate (2,3-dihydroxy-3-methylvalerate) into 2-oxo-3-methylpentanoate (2-oxo-3-methylvalerate) and of (2R)-2,3-dihydroxy-3-methylbutanoate (2,3-dihydroxyisovalerate) into 2-oxo-3-methylbutanoate (2-oxoisovalerate), the penultimate precursor to L-isoleucine and L-valine, respectively. The protein is Dihydroxy-acid dehydratase of Azotobacter vinelandii (strain DJ / ATCC BAA-1303).